The chain runs to 449 residues: Doublesex- and mab-3-related transcription factor A2 (449 aa).

Positions 57 to 104 form a DNA-binding region, DM; sequence CARCRNHGVVSALKGHKRYCRWKDCMCAKCTLIAERQRVMAAQVALRR. A disordered region spans residues 166 to 259; that stretch reads KNQLSGSATP…PSPSSAASRH (94 aa). Over residues 167 to 177 the composition is skewed to polar residues; the sequence is NQLSGSATPQP. Over residues 230 to 240 the composition is skewed to low complexity; sequence GSVSSIGSDSG. Positions 260–295 constitute a DMA domain; it reads MNAIDILTRVFPSHKRSVLELVLQGCGKDVVQAIEQ.

The protein belongs to the DMRT family.

The protein resides in the nucleus. Functionally, may be involved in sexual development. This is Doublesex- and mab-3-related transcription factor A2 (dmrta2) from Oreochromis niloticus (Nile tilapia).